The chain runs to 968 residues: RNA polymerase-associated protein RapA (968 aa).

Residues 163-332 (EVGQRFAPRV…FARLRLLDPD (170 aa)) enclose the Helicase ATP-binding domain. 176 to 183 (DEVGLGKT) provides a ligand contact to ATP. The short motif at 278 to 281 (DEAH) is the DEAH box element. The Helicase C-terminal domain maps to 491–678 (RVDWLIDFLK…GTKARYQELK (188 aa)).

This sequence belongs to the SNF2/RAD54 helicase family. RapA subfamily. As to quaternary structure, interacts with the RNAP. Has a higher affinity for the core RNAP than for the holoenzyme. Its ATPase activity is stimulated by binding to RNAP.

Its function is as follows. Transcription regulator that activates transcription by stimulating RNA polymerase (RNAP) recycling in case of stress conditions such as supercoiled DNA or high salt concentrations. Probably acts by releasing the RNAP, when it is trapped or immobilized on tightly supercoiled DNA. Does not activate transcription on linear DNA. Probably not involved in DNA repair. In Shewanella pealeana (strain ATCC 700345 / ANG-SQ1), this protein is RNA polymerase-associated protein RapA.